Reading from the N-terminus, the 466-residue chain is Ribulose bisphosphate carboxylase large chain (466 aa).

Lysine 5 is modified (N6,N6,N6-trimethyllysine). Asparagine 114 and threonine 164 together coordinate substrate. The active-site Proton acceptor is the lysine 166. Lysine 168 contacts substrate. Mg(2+) contacts are provided by lysine 192, aspartate 194, and glutamate 195. Position 192 is an N6-carboxylysine (lysine 192). Histidine 285 functions as the Proton acceptor in the catalytic mechanism. Substrate-binding residues include arginine 286, histidine 318, and serine 370.

It belongs to the RuBisCO large chain family. Type I subfamily. Heterohexadecamer of 8 large chains and 8 small chains; disulfide-linked. The disulfide link is formed within the large subunit homodimers. Mg(2+) is required as a cofactor. In terms of processing, the disulfide bond which can form in the large chain dimeric partners within the hexadecamer appears to be associated with oxidative stress and protein turnover.

The protein localises to the plastid. Its subcellular location is the chloroplast. It catalyses the reaction 2 (2R)-3-phosphoglycerate + 2 H(+) = D-ribulose 1,5-bisphosphate + CO2 + H2O. The catalysed reaction is D-ribulose 1,5-bisphosphate + O2 = 2-phosphoglycolate + (2R)-3-phosphoglycerate + 2 H(+). Functionally, ruBisCO catalyzes two reactions: the carboxylation of D-ribulose 1,5-bisphosphate, the primary event in carbon dioxide fixation, as well as the oxidative fragmentation of the pentose substrate in the photorespiration process. Both reactions occur simultaneously and in competition at the same active site. The protein is Ribulose bisphosphate carboxylase large chain of Averrhoa carambola (Star fruit).